Consider the following 397-residue polypeptide: Tryptophan synthase beta chain (397 aa).

K86 carries the post-translational modification N6-(pyridoxal phosphate)lysine.

This sequence belongs to the TrpB family. As to quaternary structure, tetramer of two alpha and two beta chains. It depends on pyridoxal 5'-phosphate as a cofactor.

It catalyses the reaction (1S,2R)-1-C-(indol-3-yl)glycerol 3-phosphate + L-serine = D-glyceraldehyde 3-phosphate + L-tryptophan + H2O. Its pathway is amino-acid biosynthesis; L-tryptophan biosynthesis; L-tryptophan from chorismate: step 5/5. The beta subunit is responsible for the synthesis of L-tryptophan from indole and L-serine. This is Tryptophan synthase beta chain from Tolumonas auensis (strain DSM 9187 / NBRC 110442 / TA 4).